The sequence spans 213 residues: Pyridoxine/pyridoxamine 5'-phosphate oxidase (213 aa).

FMN-binding positions include 60 to 65, 75 to 76, Lys-82, and Gln-104; these read RMVLMK and YS. Lys-65 serves as a coordination point for substrate. Tyr-122 and Arg-126 together coordinate substrate. Residues 139–140 and Trp-184 contribute to the FMN site; that span reads QS. 190 to 192 lines the substrate pocket; the sequence is RLH. Arg-194 is an FMN binding site.

The protein belongs to the pyridoxamine 5'-phosphate oxidase family. In terms of assembly, homodimer. FMN serves as cofactor.

It catalyses the reaction pyridoxamine 5'-phosphate + O2 + H2O = pyridoxal 5'-phosphate + H2O2 + NH4(+). It carries out the reaction pyridoxine 5'-phosphate + O2 = pyridoxal 5'-phosphate + H2O2. It participates in cofactor metabolism; pyridoxal 5'-phosphate salvage; pyridoxal 5'-phosphate from pyridoxamine 5'-phosphate: step 1/1. Its pathway is cofactor metabolism; pyridoxal 5'-phosphate salvage; pyridoxal 5'-phosphate from pyridoxine 5'-phosphate: step 1/1. Catalyzes the oxidation of either pyridoxine 5'-phosphate (PNP) or pyridoxamine 5'-phosphate (PMP) into pyridoxal 5'-phosphate (PLP). The chain is Pyridoxine/pyridoxamine 5'-phosphate oxidase from Nitrobacter winogradskyi (strain ATCC 25391 / DSM 10237 / CIP 104748 / NCIMB 11846 / Nb-255).